The following is a 312-amino-acid chain: Pollen allergen Phl p 5.0101 (312 aa).

The N-terminal stretch at 1 to 25 (MAVHQYTVALFLAVALVAGPAASYA) is a signal peptide.

This sequence belongs to the Poa p IX/Phl p VI allergen family.

It is found in the secreted. The sequence is that of Pollen allergen Phl p 5.0101 from Phleum pratense (Common timothy).